Consider the following 351-residue polypeptide: Inactive RHOMBOID-like protein 8 (351 aa).

Transmembrane regions (helical) follow at residues 48-68 (TWLV…TMGV), 130-150 (WLHS…FVGI), 160-180 (RIAV…VLFV), 183-203 (IPSI…LSAL), 216-236 (ALAI…LPFI), 239-259 (FANI…LFKP), and 294-314 (IICL…ACWG).

This sequence belongs to the peptidase S54 family. Expressed in pollen mother cell.

The protein resides in the golgi apparatus membrane. Its function is as follows. Probable inactive rhomboid-type serine protease. Probably essential for the meiosis stage-specific callose accumulation and pollen exine formation. This Arabidopsis thaliana (Mouse-ear cress) protein is Inactive RHOMBOID-like protein 8.